A 446-amino-acid chain; its full sequence is GTPase Der (446 aa).

EngA-type G domains are found at residues 3 to 167 (PVLA…AFDE) and 180 to 353 (IRLA…ASAT). GTP-binding positions include 9-16 (GRPNVGKS), 56-60 (DTGGF), 119-122 (NKAE), 186-193 (GRPNVGKS), 233-237 (DTAGL), and 298-301 (NKWD). A KH-like domain is found at 354-438 (KKLATPVLTR…PMRIEMKSSR (85 aa)).

It belongs to the TRAFAC class TrmE-Era-EngA-EngB-Septin-like GTPase superfamily. EngA (Der) GTPase family. Associates with the 50S ribosomal subunit.

Functionally, GTPase that plays an essential role in the late steps of ribosome biogenesis. The chain is GTPase Der from Methylibium petroleiphilum (strain ATCC BAA-1232 / LMG 22953 / PM1).